Consider the following 96-residue polypeptide: Ferredoxin (96 aa).

Positions tyrosine 4 to glutamate 94 constitute a 2Fe-2S ferredoxin-type domain. [2Fe-2S] cluster is bound by residues cysteine 40, cysteine 45, cysteine 48, and cysteine 78.

It belongs to the 2Fe2S plant-type ferredoxin family. [2Fe-2S] cluster serves as cofactor.

The protein localises to the plastid. It localises to the chloroplast. Functionally, ferredoxins are iron-sulfur proteins that transfer electrons in a wide variety of metabolic reactions. The protein is Ferredoxin of Panax ginseng (Korean ginseng).